A 407-amino-acid chain; its full sequence is MTTSGALFPSLVPGSRGASNKYLVEFRAGKMSLKGTTVTPDKRKGLVYIQQTDDSLIHFCWKDRTSGNVEDDLIIFPDDCEFKRVPQCPSGRVYVLKFKAGSKRLFFWMQEPKTDQDEEHCRKVNEYLNNPPMPGALGASGSSGHELSALGGEGGLQSLLGNMSHSQLMQLIGPAGLGGLGGLGALTGPGLASLLGSSGPPGSSSSSSSRSQSAAVTPSSTTSSTRATPAPSAPAAASATSPSPAPSSGNGASTAASPTQPIQLSDLQSILATMNVPAGPAGGQQVDLASVLTPEIMAPILANADVQERLLPYLPSGESLPQTADEIQNTLTSPQFQQALGMFSAALASGQLGPLMCQFGLPAEAVEAANKGDVEAFAKAMQNNAKPEQKEGDTKDKKDEEEDMSLD.

Thr-2 carries the post-translational modification N-acetylthreonine. Ser-15 carries the post-translational modification Phosphoserine. The Pru domain occupies Ala-18–Pro-131. Lys-34 is covalently cross-linked (Glycyl lysine isopeptide (Lys-Gly) (interchain with G-Cter in ubiquitin)). Tyr-127 bears the Phosphotyrosine mark. Residues Ser-140 and Ser-211 each carry the phosphoserine modification. 2 disordered regions span residues Leu-194–Thr-259 and Lys-379–Asp-407. Thr-217 is modified (phosphothreonine). Residues Ser-253–Asp-407 are interaction with UCHL5. The 115-residue stretch at Pro-277–Glu-391 folds into the DEUBAD domain. Positions Pro-387 to Lys-398 are enriched in basic and acidic residues. Ser-405 is subject to Phosphoserine.

The protein belongs to the ADRM1 family. As to quaternary structure, component of the 19S proteasome regulatory particle complex. The 26S proteasome consists of a 20S core particle (CP) and two 19S regulatory subunits (RP). Interacts with the proteasomal scaffolding protein PSMD1. Interacts with deubiquitinase UCHL5; this interaction activates the auto-inhibited UCHL5 by deoligomerizing it. Interacts with UBQLN2 and ubiquitin. Ubiquitinated by UBE3C in response to proteotoxic stress.

The protein localises to the cytoplasm. The protein resides in the nucleus. Its function is as follows. Component of the 26S proteasome, a multiprotein complex involved in the ATP-dependent degradation of ubiquitinated proteins. This complex plays a key role in the maintenance of protein homeostasis by removing misfolded or damaged proteins, which could impair cellular functions, and by removing proteins whose functions are no longer required. Therefore, the proteasome participates in numerous cellular processes, including cell cycle progression, apoptosis, or DNA damage repair. Within the complex, functions as a proteasomal ubiquitin receptor. Engages and activates 19S-associated deubiquitinases UCHL5 and PSMD14 during protein degradation. UCHL5 reversibly associate with the 19S regulatory particle whereas PSMD14 is an intrinsic subunit of the proteasome lid subcomplex. The sequence is that of Proteasomal ubiquitin receptor ADRM1 (ADRM1) from Homo sapiens (Human).